The chain runs to 168 residues: Desumoylating isopeptidase 1 (168 aa).

Positions 7 to 149 constitute a PPPDE domain; that stretch reads YPVKLYVYDL…FGQALRPLLD (143 aa). H38 is a catalytic residue. The short motif at 83–91 is the Nuclear export signal 1 element; the sequence is IFLEYLSSL. The active site involves C108. Positions 139–153 match the Nuclear export signal 2 motif; the sequence is PFGQALRPLLDSIQI.

It belongs to the DeSI family. As to quaternary structure, homodimer. Interacts with UBQLN4; leading to the export of UBQLN4 from the nucleus.

It is found in the cytoplasm. The protein resides in the nucleus. The enzyme catalyses S-hexadecanoyl-L-cysteinyl-[protein] + H2O = L-cysteinyl-[protein] + hexadecanoate + H(+). Palmostatin B inhibits its palmitoyl protein thioesterase activity. Its function is as follows. Protease which deconjugates SUMO1, SUMO2 and SUMO3 from some substrate proteins. Has isopeptidase but not SUMO-processing activity. Desumoylates ZBTB46. Collaborates with UBQLN4 in the export of ubiquitinated proteins from the nucleus to the cytoplasm. Exhibits palmitoyl protein thioesterase (S-depalmitoylation) activity towards synthetic substrates 4-methylumbelliferyl-6-S-palmitoyl-beta-D-glucopyranoside and S-depalmitoylation probe 5 (DPP-5). The sequence is that of Desumoylating isopeptidase 1 from Homo sapiens (Human).